Here is a 724-residue protein sequence, read N- to C-terminus: Pediocin PA-1 transport/processing ATP-binding protein PedD (724 aa).

The Peptidase C39 domain maps to 13–140 (QVDENDCGLA…KEWTQIAIII (128 aa)). Cysteine 19 is a catalytic residue. Helical transmembrane passes span 170–190 (IGLI…GAYF), 207–227 (LSLV…INYI), 284–304 (TTLT…FLAY), 307–327 (INLF…VWLF), 396–416 (IKAA…TFFV), and 426–446 (LLTY…IINL). One can recognise an ABC transmembrane type-1 domain in the interval 170-452 (IGLIITAAAI…IINLQPKLQA (283 aa)). The ABC transporter domain occupies 486 to 722 (IEVNHVSFNY…NGYYARLIHN (237 aa)). Position 519–526 (519–526 (GMSGSGKT)) interacts with ATP.

Belongs to the ABC transporter superfamily. Pediocin PA-1 exporter (TC 3.A.1.112.2) family.

Its subcellular location is the cell membrane. Its function is as follows. Involved in the export process of the bacteriocin pediocin PA-1/AcH. Is also essential for pediocin production. In Pediococcus acidilactici, this protein is Pediocin PA-1 transport/processing ATP-binding protein PedD (pedD).